We begin with the raw amino-acid sequence, 406 residues long: Peptidase T (406 aa).

His82 lines the Zn(2+) pocket. The active site involves Asp84. Residue Asp142 coordinates Zn(2+). The active-site Proton acceptor is Glu176. Residues Glu177, Asp199, and His381 each contribute to the Zn(2+) site.

The protein belongs to the peptidase M20B family. The cofactor is Zn(2+).

It localises to the cytoplasm. It carries out the reaction Release of the N-terminal residue from a tripeptide.. Cleaves the N-terminal amino acid of tripeptides. The polypeptide is Peptidase T (Streptococcus agalactiae serotype III (strain NEM316)).